The primary structure comprises 282 residues: Shikimate dehydrogenase (NADP(+)) (282 aa).

Shikimate is bound by residues 16–18 (SLS) and Thr63. Catalysis depends on Lys67, which acts as the Proton acceptor. Shikimate is bound by residues Asn88 and Asp103. NADP(+)-binding positions include 128–132 (GAGGA) and Leu219. Residue Tyr221 participates in shikimate binding. Gly243 contributes to the NADP(+) binding site.

The protein belongs to the shikimate dehydrogenase family. In terms of assembly, homodimer.

The catalysed reaction is shikimate + NADP(+) = 3-dehydroshikimate + NADPH + H(+). It participates in metabolic intermediate biosynthesis; chorismate biosynthesis; chorismate from D-erythrose 4-phosphate and phosphoenolpyruvate: step 4/7. Its function is as follows. Involved in the biosynthesis of the chorismate, which leads to the biosynthesis of aromatic amino acids. Catalyzes the reversible NADPH linked reduction of 3-dehydroshikimate (DHSA) to yield shikimate (SA). The protein is Shikimate dehydrogenase (NADP(+)) of Xylella fastidiosa (strain M12).